Reading from the N-terminus, the 492-residue chain is Protein nucleotidyltransferase YdiU (492 aa).

ATP is bound by residues G88, G90, R91, K111, D123, G124, R174, and R181. Residue D250 is the Proton acceptor of the active site. Residues N251 and D260 each coordinate Mg(2+). D260 contributes to the ATP binding site.

Belongs to the SELO family. Mg(2+) is required as a cofactor. The cofactor is Mn(2+).

It carries out the reaction L-seryl-[protein] + ATP = 3-O-(5'-adenylyl)-L-seryl-[protein] + diphosphate. The catalysed reaction is L-threonyl-[protein] + ATP = 3-O-(5'-adenylyl)-L-threonyl-[protein] + diphosphate. The enzyme catalyses L-tyrosyl-[protein] + ATP = O-(5'-adenylyl)-L-tyrosyl-[protein] + diphosphate. It catalyses the reaction L-histidyl-[protein] + UTP = N(tele)-(5'-uridylyl)-L-histidyl-[protein] + diphosphate. It carries out the reaction L-seryl-[protein] + UTP = O-(5'-uridylyl)-L-seryl-[protein] + diphosphate. The catalysed reaction is L-tyrosyl-[protein] + UTP = O-(5'-uridylyl)-L-tyrosyl-[protein] + diphosphate. In terms of biological role, nucleotidyltransferase involved in the post-translational modification of proteins. It can catalyze the addition of adenosine monophosphate (AMP) or uridine monophosphate (UMP) to a protein, resulting in modifications known as AMPylation and UMPylation. The polypeptide is Protein nucleotidyltransferase YdiU (Rhodopseudomonas palustris (strain HaA2)).